We begin with the raw amino-acid sequence, 484 residues long: Putative tyramine receptor 2 (484 aa).

The Extracellular segment spans residues Met-1–Thr-54. N-linked (GlcNAc...) asparagine glycosylation is present at Asn-13. Residues Ala-55–Phe-77 traverse the membrane as a helical segment. The Cytoplasmic segment spans residues Thr-78 to Asn-87. Residues Phe-88–Val-109 form a helical membrane-spanning segment. Residues Ala-110–Met-126 are Extracellular-facing. A disulfide bridge connects residues Cys-124 and Cys-203. The helical transmembrane segment at Trp-127–Leu-147 threads the bilayer. Over Asp-148–Arg-167 the chain is Cytoplasmic. The chain crosses the membrane as a helical span at residues Val-168 to Trp-190. At Asn-191 to Ser-215 the chain is on the extracellular side. Asn-198 carries an N-linked (GlcNAc...) asparagine glycan. Residues Ser-216–Ala-237 form a helical membrane-spanning segment. Over Thr-238–Thr-411 the chain is Cytoplasmic. Residues Ser-253–Thr-280 are compositionally biased toward polar residues. 2 disordered regions span residues Ser-253–Val-322 and Thr-350–Val-383. The span at Glu-295 to Lys-306 shows a compositional bias: basic residues. Low complexity predominate over residues Thr-350–Thr-360. Residues Ala-361–Ala-378 show a composition bias toward polar residues. A helical transmembrane segment spans residues Leu-412 to Val-433. At Pro-434 to Asn-448 the chain is on the extracellular side. A helical membrane pass occupies residues Phe-449 to Leu-470. Over Asp-471 to Thr-484 the chain is Cytoplasmic.

The protein belongs to the G-protein coupled receptor 1 family.

It is found in the cell membrane. Functionally, G-protein coupled receptor for tyramine, a known neurotransmitter and neuromodulator and direct precursor of octopamine. This Locusta migratoria (Migratory locust) protein is Putative tyramine receptor 2 (GCR2).